We begin with the raw amino-acid sequence, 369 residues long: CLIP domain-containing serine protease HP8 (369 aa).

The signal sequence occupies residues 1-24; that stretch reads MKTPFEKIRIISCILVIVSTNVVG. Residues 25-81 constitute a propeptide that is removed on maturation; sequence QKCNGGANCIPLEECTDLFQQLKQGNSPQLTRLLRGLHCGFEDLNSPKICCPPEFLA. Residues 26-75 enclose the Clip domain; that stretch reads KCNGGANCIPLEECTDLFQQLKQGNSPQLTRLLRGLHCGFEDLNSPKICC. Intrachain disulfides connect Cys27-Cys74, Cys33-Cys63, Cys39-Cys75, Cys105-Cys239, Cys142-Cys158, Cys186-Cys191, Cys286-Cys303, and Cys313-Cys344. One can recognise a Peptidase S1 domain in the interval 113–368; sequence IFGGIQTEID…FMDWILSKLE (256 aa). Residue His157 is the Charge relay system of the active site. 4 residues coordinate Ca(2+): Glu177, Asn179, Thr182, and Asp185. Asn179 carries N-linked (GlcNAc...) asparagine glycosylation. Residue Asp219 is the Charge relay system of the active site. Residue Ser317 is the Charge relay system of the active site.

It belongs to the peptidase S1 family. CLIP subfamily. In terms of assembly, in the active form, heterodimer of a light chain and a heavy chain; disulfide-linked. Proteolytically cleaved for activation. Cleavage produces a light chain and a catalytic heavy chain which remains covalently associated probably through an interchain disulfide bond. In larvae, expressed in the fat body and hemocytes.

The protein resides in the secreted. The protein localises to the cytoplasm. With respect to regulation, inhibited by (p-amidinophenyl) methanesulfonyl fluoride, p-nitrophenyl-p'-guanidinobenzoate, D-phenylalanyl-L-prolyl-L-arginyl chloromethane, leupeptin, antipain and to a lesser extent by antithrombin III. Endopeptidase with selective post-Arg cleavage site. Functions in the innate immune response to fungal and Gram-positive bacterial infections. Upon pathogen infection promotes nodulation; a cellular defense response in which hemocytes surround and isolate invading pathogens forming aggregates called nodules. Involved in activating nodule formation in response to infection with M.luteus, E.coli or S.cerevisiae. Able to bind the microbes M.luteus, E.coli or S.cerevisiae. According to another report, does not bind microorganisms. The polypeptide is CLIP domain-containing serine protease HP8 (Bombyx mori (Silk moth)).